The chain runs to 224 residues: Holliday junction branch migration complex subunit RuvA (224 aa).

Residues 1-64 (MIGKVAGILD…EDLLQLFGFP (64 aa)) form a domain I region. The segment at 65-143 (TMIEKEWHRL…ALMAMGGGTA (79 aa)) is domain II. The tract at residues 141–185 (GTAALAPSEPPEPEPGTSSGSRRKTRAPEPPRPSHTADALSALAN) is disordered. The flexible linker stretch occupies residues 144–170 (ALAPSEPPEPEPGTSSGSRRKTRAPEP). A domain III region spans residues 171–224 (PRPSHTADALSALANLGYQPTDAAQAVAQAAGESPDADTAALIRAALKLLAPKS).

It belongs to the RuvA family. As to quaternary structure, homotetramer. Forms an RuvA(8)-RuvB(12)-Holliday junction (HJ) complex. HJ DNA is sandwiched between 2 RuvA tetramers; dsDNA enters through RuvA and exits via RuvB. An RuvB hexamer assembles on each DNA strand where it exits the tetramer. Each RuvB hexamer is contacted by two RuvA subunits (via domain III) on 2 adjacent RuvB subunits; this complex drives branch migration. In the full resolvosome a probable DNA-RuvA(4)-RuvB(12)-RuvC(2) complex forms which resolves the HJ.

It localises to the cytoplasm. In terms of biological role, the RuvA-RuvB-RuvC complex processes Holliday junction (HJ) DNA during genetic recombination and DNA repair, while the RuvA-RuvB complex plays an important role in the rescue of blocked DNA replication forks via replication fork reversal (RFR). RuvA specifically binds to HJ cruciform DNA, conferring on it an open structure. The RuvB hexamer acts as an ATP-dependent pump, pulling dsDNA into and through the RuvAB complex. HJ branch migration allows RuvC to scan DNA until it finds its consensus sequence, where it cleaves and resolves the cruciform DNA. The chain is Holliday junction branch migration complex subunit RuvA from Cereibacter sphaeroides (strain ATCC 17029 / ATH 2.4.9) (Rhodobacter sphaeroides).